A 473-amino-acid chain; its full sequence is 3-isopropylmalate dehydratase large subunit (473 aa).

3 residues coordinate [4Fe-4S] cluster: Cys-355, Cys-415, and Cys-418. Residues 423–452 (PDQLAPGERSASTSNRNFEGRQGKGGRTHL) are disordered.

This sequence belongs to the aconitase/IPM isomerase family. LeuC type 1 subfamily. As to quaternary structure, heterodimer of LeuC and LeuD. It depends on [4Fe-4S] cluster as a cofactor.

The enzyme catalyses (2R,3S)-3-isopropylmalate = (2S)-2-isopropylmalate. The protein operates within amino-acid biosynthesis; L-leucine biosynthesis; L-leucine from 3-methyl-2-oxobutanoate: step 2/4. Its function is as follows. Catalyzes the isomerization between 2-isopropylmalate and 3-isopropylmalate, via the formation of 2-isopropylmaleate. The sequence is that of 3-isopropylmalate dehydratase large subunit from Corynebacterium jeikeium (strain K411).